The primary structure comprises 432 residues: MLSKVPATIEEIAAREILDSRGRPTIEAEVRLESGAHGIAQVPSGASTGSFEAHELRDGDPKRYDGKGVEKAVRNVTEKIAPVVEGLDAFDQMAVDQAMIDRDGTDNKKELGANAILGVSLATAKAAAAELAIPLYRYLGGPLANVLPVPMMNVINGGAHADNNVDFQEFMIMPVGAETFKEALRWGAEVFAVLGKVLKERKLLSGGVGDEGGYAPNLTSNQQALDILIEAIEQAGYKPGSQIALAMDIAASEFFKNGQYEYDGGSHSPQEFIDYQAKLVSQYPIVSIEDGLHEDDWESWKGLTTSLGTKTQLVGDDLMVTNPVRLQKSIDLGVANAILIKLNQIGTLSETLETISLATRHSYRSVISHRSGETEDTTIADLAVATRVGQIKTGSLCRSERVAKYNRLLRIEDELGDRAVYAPKIGLGPKHS.

A disordered region spans residues 41-64 (QVPSGASTGSFEAHELRDGDPKRY). Positions 52-64 (EAHELRDGDPKRY) are enriched in basic and acidic residues. Q168 provides a ligand contact to (2R)-2-phosphoglycerate. The Proton donor role is filled by E211. Mg(2+) is bound by residues D248, E289, and D316. (2R)-2-phosphoglycerate is bound by residues K341, R370, S371, and K392. Residue K341 is the Proton acceptor of the active site.

Belongs to the enolase family. Mg(2+) serves as cofactor.

It localises to the cytoplasm. The protein resides in the secreted. The protein localises to the cell surface. The catalysed reaction is (2R)-2-phosphoglycerate = phosphoenolpyruvate + H2O. It functions in the pathway carbohydrate degradation; glycolysis; pyruvate from D-glyceraldehyde 3-phosphate: step 4/5. Functionally, catalyzes the reversible conversion of 2-phosphoglycerate (2-PG) into phosphoenolpyruvate (PEP). It is essential for the degradation of carbohydrates via glycolysis. This Synechocystis sp. (strain ATCC 27184 / PCC 6803 / Kazusa) protein is Enolase.